The following is a 175-amino-acid chain: MGRTLENKQKIVTEIKSLLDDSEMAVVLDYKGLTIKEMSDLRSRLQTTNGICKVTKNSLMRKAIDGDSNWNDLESLLTGTNAFVLIKEDVGGAVKAIQSFQKDTKKSETKGALFEGRLLSDSEIKEIASLPSKEVLMAKIAGALNGVATKIAISINEVPSGLARSLKQHSEKSES.

The protein belongs to the universal ribosomal protein uL10 family. Part of the ribosomal stalk of the 50S ribosomal subunit. The N-terminus interacts with L11 and the large rRNA to form the base of the stalk. The C-terminus forms an elongated spine to which L12 dimers bind in a sequential fashion forming a multimeric L10(L12)X complex.

Forms part of the ribosomal stalk, playing a central role in the interaction of the ribosome with GTP-bound translation factors. In Prochlorococcus marinus (strain AS9601), this protein is Large ribosomal subunit protein uL10.